Consider the following 388-residue polypeptide: Zinc finger protein 1 (388 aa).

Residues 1–19 (MSSIPNINWNDPNNGKSNT) show a composition bias toward polar residues. Disordered regions lie at residues 1–120 (MSSI…QQPL), 157–219 (LQQR…QQWD), and 236–311 (SSIQ…KPIT). A compositionally biased stretch (low complexity) spans 20 to 38 (SRQSQPQPQLPSNVSPPNS). 2 stretches are compositionally biased toward polar residues: residues 52–67 (YGSS…NPNT) and 88–97 (YPVQQTAQQR). 2 stretches are compositionally biased toward low complexity: residues 102–120 (LQQV…QQPL) and 157–172 (LQQR…KSQL). Polar residues predominate over residues 173–203 (NEQNAMMSASTQQYPVQDFTNPYPNAQNPAE). Low complexity-rich tracts occupy residues 204–217 (QQQQ…QSQQ) and 236–259 (SSIQ…KQQQ). Residues 268 to 278 (KKKPGRKPKLR) show a composition bias toward basic residues. A compositionally biased stretch (polar residues) spans 282–294 (ESSSETPQVPKTA). Positions 318-345 (CLTCRQRKKRCCETRPRCTECTRLRLNC) form a DNA-binding region, zn(2)-C6 fungal-type. Residues 348-367 (PKPGTEHKNKPKDQKDDENT) form a disordered region. A compositionally biased stretch (basic and acidic residues) spans 351–367 (GTEHKNKPKDQKDDENT).

Its subcellular location is the nucleus. In terms of biological role, perhaps a regulatory role. May be involved in transcriptional activation. The protein is Zinc finger protein 1 (CZF1) of Candida albicans (strain WO-1) (Yeast).